Here is a 290-residue protein sequence, read N- to C-terminus: NH(3)-dependent NAD(+) synthetase (290 aa).

Residue 33 to 40 (GVSGGVDS) participates in ATP binding. Residue Asp-39 participates in Mg(2+) binding. Arg-154 provides a ligand contact to deamido-NAD(+). Thr-174 contacts ATP. Position 179 (Glu-179) interacts with Mg(2+). Residues Lys-187 and Asp-194 each coordinate deamido-NAD(+). Residues Lys-203 and Ser-225 each coordinate ATP.

This sequence belongs to the NAD synthetase family. Homodimer.

It catalyses the reaction deamido-NAD(+) + NH4(+) + ATP = AMP + diphosphate + NAD(+) + H(+). Its pathway is cofactor biosynthesis; NAD(+) biosynthesis; NAD(+) from deamido-NAD(+) (ammonia route): step 1/1. In terms of biological role, catalyzes the ATP-dependent amidation of deamido-NAD to form NAD. Uses ammonia as a nitrogen source. The polypeptide is NH(3)-dependent NAD(+) synthetase (Thermotoga neapolitana (strain ATCC 49049 / DSM 4359 / NBRC 107923 / NS-E)).